Consider the following 101-residue polypeptide: MNNTEFSKIADITIAYITDTIEEQDKEASIDVDLQGDILNLDTDKGIYVINKQSAAKEIWLSSPVSGPCHFFYEQGKWKNRVGLELMAILTEELDIDFNNV.

The protein belongs to the frataxin family.

Functionally, involved in iron-sulfur (Fe-S) cluster assembly. May act as a regulator of Fe-S biogenesis. The chain is Iron-sulfur cluster assembly protein CyaY from Rickettsia akari (strain Hartford).